Consider the following 348-residue polypeptide: Oxidase ucsJ (348 aa).

This sequence belongs to the avfA family.

Its pathway is mycotoxin biosynthesis. Its function is as follows. Oxidase; part of the gene cluster that mediates the biosynthesis of UCS1025A, a member of the pyrrolizidinone family that acts as a strong telomerase inhibitor and displays potent antibacterial and antitumor properties. These compounds share a hemiaminal-containing pyrrolizidinone core fused with a gamma-lactone, giving a furopyrrolizidine that is connected to a decalin fragment. The polyketide synthase module (PKS) of the PKS-NRPS ucsA is responsible for the synthesis of the polyketide backbone via the condensation of an acetyl-CoA starter unit with 6 malonyl-CoA units. The downstream nonribosomal peptide synthetase (NRPS) module then amidates the carboxyl end of the polyketide with a 2S,3S-methylproline derived from L-isoleucine by the 2-oxoglutarate-dependent dioxygenase ucsF which converts L-isoleucine to (4S,5S)-4-methylpyrroline-5-carboxylate that is further converted to 2S,3S-methylproline by the pyrroline-5-carboxylate reductase ucsG. Reductive release of the completed aminoacyl polyketide from the assembly line can form the 3-pyrrolin-2-one structure via an intramolecular Knoevenagel reaction. Because ucsA lacks a designated enoylreductase (ER) domain, the required activity is provided the enoyl reductase ucsL. This keto acyclic precursor is the substrate of the Diels-Alderase ucsH, that catalyzes the Diels-Alder cycloaddition. Oxidation of the 3S-methyl group to a carboxylate by the cytochrome P450 monooxygenase ucsK allows an oxa-Michael cyclization that might involve the reductase/dehydrogenase ucsI and which furnishes the furopyrrolizidine. The oxidase ucsJ likely plays a critical role in stereoselective reduction of the C5-C6 double bond to afford the required R-configured carboxylate group. Further enolization and oxidation at C5 by an unidentified enzyme affords the last intermediate that can undergo oxa-Michael cyclization to yield UCS1025A. The protein is Oxidase ucsJ of Acremonium sp.